The primary structure comprises 548 residues: Thermosome subunit beta (548 aa).

It belongs to the TCP-1 chaperonin family. As to quaternary structure, forms a Heterooligomeric complex of two stacked eight-membered rings.

Functionally, molecular chaperone; binds unfolded polypeptides in vitro, and has a weak ATPase activity. The polypeptide is Thermosome subunit beta (thsB) (Aeropyrum pernix (strain ATCC 700893 / DSM 11879 / JCM 9820 / NBRC 100138 / K1)).